Reading from the N-terminus, the 452-residue chain is Protein FAM81B (452 aa).

2 stretches are compositionally biased toward polar residues: residues 1–11 (MQLQFLGTLAS) and 38–55 (IMSS…TATA). Residues 1–85 (MQLQFLGTLA…KVRLSPAKMS (85 aa)) are disordered. Coiled coils occupy residues 164–192 (IQTI…DQAA) and 329–452 (LGHI…LQEV).

It belongs to the FAM81 family.

The chain is Protein FAM81B (FAM81B) from Homo sapiens (Human).